The following is a 179-amino-acid chain: Cytoglobin-2 (179 aa).

A compositionally biased stretch (acidic residues) spans 1 to 11; sequence MEKEREDEETE. A disordered region spans residues 1-20; sequence MEKEREDEETEGRERPEPLT. One can recognise a Globin domain in the interval 18-167; sequence PLTDVERGII…LYWHITGAYT (150 aa). Heme b-binding residues include His-81 and His-113.

The protein belongs to the globin family. Monomeric. As to expression, expressed in all tissues examined, with highest levels in brain and eye, and considerably lower levels in skin, gut, heart, gill, liver and muscle.

The protein resides in the cytoplasm. It localises to the nucleus. The enzyme catalyses Fe(II)-heme b-[protein] + nitric oxide + O2 = Fe(III)-heme b-[protein] + nitrate. The catalysed reaction is Fe(III)-heme b-[protein] + nitric oxide + H2O = Fe(II)-heme b-[protein] + nitrite + 2 H(+). It carries out the reaction 2 superoxide + 2 H(+) = H2O2 + O2. It catalyses the reaction H2O2 + AH2 = A + 2 H2O. Functionally, probable multifunctional globin with a hexacoordinated heme iron required for the catalysis of various reactions depending on redox condition of the cell as well as oxygen availability. Has a nitric oxide dioxygenase (NOD) activity and is most probably involved in cell-mediated and oxygen-dependent nitric oxide consumption. Under normoxic conditions functions as a nitric oxide dioxygenase (NOD) but under hypoxic conditions the globin may switch its function to that of a nitrite (NO2) reductase (NiR), generating nitric oxide. Could also have peroxidase and superoxide dismutase activities, detoxifying reactive oxygen species and protecting cells against oxidative stress. Also binds dioxygen with low affinity and could function as an oxygen sensor but has probably no function as a respiratory oxygen carrier. This Danio rerio (Zebrafish) protein is Cytoglobin-2.